A 513-amino-acid chain; its full sequence is Putative ATP-dependent RNA helicase QP509L (513 aa).

Residues 110–262 enclose the Helicase ATP-binding domain; the sequence is KKLLSPYGRF…KIIIHHLGQP (153 aa). 123–130 is an ATP binding site; the sequence is LNTGLGKT. The DEAH box motif lies at 215-218; that stretch reads DEAH.

The protein belongs to the DEAD box helicase family. DEAH subfamily.

It catalyses the reaction ATP + H2O = ADP + phosphate + H(+). This is Putative ATP-dependent RNA helicase QP509L from Ornithodoros (relapsing fever ticks).